Consider the following 101-residue polypeptide: Large ribosomal subunit protein uL24 (101 aa).

It belongs to the universal ribosomal protein uL24 family. Part of the 50S ribosomal subunit.

In terms of biological role, one of two assembly initiator proteins, it binds directly to the 5'-end of the 23S rRNA, where it nucleates assembly of the 50S subunit. One of the proteins that surrounds the polypeptide exit tunnel on the outside of the subunit. The polypeptide is Large ribosomal subunit protein uL24 (Cereibacter sphaeroides (strain ATCC 17029 / ATH 2.4.9) (Rhodobacter sphaeroides)).